A 507-amino-acid chain; its full sequence is ATP synthase subunit alpha (507 aa).

Position 170–177 (170–177) interacts with ATP; the sequence is GDRQTGKT.

This sequence belongs to the ATPase alpha/beta chains family. In terms of assembly, F-type ATPases have 2 components, CF(1) - the catalytic core - and CF(0) - the membrane proton channel. CF(1) has five subunits: alpha(3), beta(3), gamma(1), delta(1), epsilon(1). CF(0) has three main subunits: a(1), b(2) and c(9-12). The alpha and beta chains form an alternating ring which encloses part of the gamma chain. CF(1) is attached to CF(0) by a central stalk formed by the gamma and epsilon chains, while a peripheral stalk is formed by the delta and b chains.

It is found in the cell inner membrane. The enzyme catalyses ATP + H2O + 4 H(+)(in) = ADP + phosphate + 5 H(+)(out). In terms of biological role, produces ATP from ADP in the presence of a proton gradient across the membrane. The alpha chain is a regulatory subunit. In Thermosipho africanus (strain TCF52B), this protein is ATP synthase subunit alpha.